We begin with the raw amino-acid sequence, 799 residues long: Elongation factor G, mitochondrial (799 aa).

Residues 1-34 (MRCPSLTRLPYRAVSGLPRSVVRLQSQNFLTRRC) constitute a mitochondrion transit peptide. The tr-type G domain maps to 97 to 384 (SRVRNIGIAA…GVVDYLPNPA (288 aa)). GTP contacts are provided by residues 106 to 113 (AHIDSGKT), 182 to 186 (DTPGH), and 236 to 239 (NKMD).

Belongs to the TRAFAC class translation factor GTPase superfamily. Classic translation factor GTPase family. EF-G/EF-2 subfamily.

Its subcellular location is the mitochondrion. It functions in the pathway protein biosynthesis; polypeptide chain elongation. In terms of biological role, mitochondrial GTPase that catalyzes the GTP-dependent ribosomal translocation step during translation elongation. During this step, the ribosome changes from the pre-translocational (PRE) to the post-translocational (POST) state as the newly formed A-site-bound peptidyl-tRNA and P-site-bound deacylated tRNA move to the P and E sites, respectively. Catalyzes the coordinated movement of the two tRNA molecules, the mRNA and conformational changes in the ribosome. This is Elongation factor G, mitochondrial (mef1) from Aspergillus flavus (strain ATCC 200026 / FGSC A1120 / IAM 13836 / NRRL 3357 / JCM 12722 / SRRC 167).